A 483-amino-acid polypeptide reads, in one-letter code: Centrosomal protein cep57l1 (483 aa).

Residues 94–228 adopt a coiled-coil conformation; the sequence is EHKKVLESEK…AQVQTSLEVN (135 aa). Disordered stretches follow at residues 237 to 261, 303 to 325, and 416 to 460; these read AQNS…SKEP, PQVS…GGSR, and KEQP…SKAS. Residues 243-252 show a composition bias toward basic residues; sequence RKVKKKKQSK. The stretch at 375–418 forms a coiled coil; the sequence is EDLERELDYVVKQMEIKSDQIMKLKRHQLNVNKLKKTAKLLKEQ. Polar residues predominate over residues 420 to 435; it reads RPTSVTKLAADKQNTG.

The protein belongs to the translokin family. As to quaternary structure, interacts with clip1, mis12, ndc80 and zwint. Interacts with gamma-tubulin.

It is found in the cytoplasm. The protein resides in the cytoskeleton. Its subcellular location is the microtubule organizing center. The protein localises to the centrosome. It localises to the chromosome. It is found in the centromere. The protein resides in the kinetochore. Its subcellular location is the spindle. Its function is as follows. Required for spindle microtubule attachment to both kinetochores and centrosomes. Also functions to tether minus-ends of spindle microtubules to centrosomes. May act by forming ring-like structures around microtubules, or by serving as a cross-linker or scaffold at the attachment site. This Xenopus tropicalis (Western clawed frog) protein is Centrosomal protein cep57l1 (cep57l1).